The following is a 509-amino-acid chain: Cytochrome P450 monooxygenase hepC (509 aa).

Residues 5 to 25 traverse the membrane as a helical segment; the sequence is MIIPSFWTGTAIIGLVACAYV. Cysteine 454 contacts heme. Asparagine 491 carries an N-linked (GlcNAc...) asparagine glycan.

The protein belongs to the cytochrome P450 family. Heme serves as cofactor.

It localises to the membrane. It functions in the pathway secondary metabolite biosynthesis. Its function is as follows. Cytochrome P450 monooxygenase; part of the gene cluster that mediates the biosynthesis of heptelidic acid (HA), a sesquiterpene lactone that acts as an inhibitor of glyceraldehyde-3-phosphatedehydrogenase (GAPDH) and a growth inhibitor of the salt-tolerant lactic acid bacteria in soy sauce brewing. This is Cytochrome P450 monooxygenase hepC from Aspergillus oryzae (strain ATCC 42149 / RIB 40) (Yellow koji mold).